Consider the following 40-residue polypeptide: 67 kDa serum albumin (40 aa).

The region spanning D1–A40 is the Albumin domain. H4 contacts Cu cation.

It belongs to the ALB/AFP/VDB family. As to expression, plasma.

It is found in the secreted. Functionally, serum albumin, the main protein of plasma, has a good binding capacity for water, Ca(2+), Na(+), K(+), fatty acids, hormones, bilirubin and drugs. Its main function is the regulation of the colloidal osmotic pressure of blood. The protein is 67 kDa serum albumin of Trachemys scripta (Red-eared slider turtle).